Consider the following 346-residue polypeptide: Leucine zipper protein 2 (346 aa).

A signal peptide spans 1 to 19 (MKFSPAHYLLPLLPALVLS). A coiled-coil region spans residues 16-211 (LVLSTRQDYE…QMKAMKETVQ (196 aa)). Residue N133 is glycosylated (N-linked (GlcNAc...) asparagine). The tract at residues 164 to 192 (LRYGKKDLLFKAQQLTDLEQKLAVAKNEL) is leucine-zipper. The disordered stretch occupies residues 225 to 346 (ALSLITSNPT…GMAAREEKIL (122 aa)). Over residues 250 to 261 (AAAKSKPQQSAS) the composition is skewed to low complexity. Residues 262-283 (GNNESSQVESTKEGSPSTTACD) are compositionally biased toward polar residues. N-linked (GlcNAc...) asparagine glycosylation is present at N264. A compositionally biased stretch (basic and acidic residues) spans 286-298 (DEGRTCSIKHKES). N-linked (GlcNAc...) asparagine glycosylation is present at N302.

Its subcellular location is the secreted. The sequence is that of Leucine zipper protein 2 (LUZP2) from Pongo abelii (Sumatran orangutan).